A 392-amino-acid chain; its full sequence is Succinyl-diaminopimelate desuccinylase (392 aa).

His-76 contacts Zn(2+). Residue Asp-78 is part of the active site. Residue Asp-107 coordinates Zn(2+). Glu-143 acts as the Proton acceptor in catalysis. Glu-144, Glu-172, and His-357 together coordinate Zn(2+).

It belongs to the peptidase M20A family. DapE subfamily. In terms of assembly, homodimer. Requires Zn(2+) as cofactor. It depends on Co(2+) as a cofactor.

The catalysed reaction is N-succinyl-(2S,6S)-2,6-diaminopimelate + H2O = (2S,6S)-2,6-diaminopimelate + succinate. It functions in the pathway amino-acid biosynthesis; L-lysine biosynthesis via DAP pathway; LL-2,6-diaminopimelate from (S)-tetrahydrodipicolinate (succinylase route): step 3/3. Its function is as follows. Catalyzes the hydrolysis of N-succinyl-L,L-diaminopimelic acid (SDAP), forming succinate and LL-2,6-diaminopimelate (DAP), an intermediate involved in the bacterial biosynthesis of lysine and meso-diaminopimelic acid, an essential component of bacterial cell walls. This Helicobacter hepaticus (strain ATCC 51449 / 3B1) protein is Succinyl-diaminopimelate desuccinylase.